The primary structure comprises 175 residues: MARYQCPDCQYVYDESKGEEHEGFAPNTPWIVIPEDWCCPDCAVRDKLDFVLIEGSTGEKNISSNNTLSVSAKVSSSDVNTEISNTTMSAEIALDVATEGQHLNGRKPRVTNLQSGAAFLKWICITCGHIYDEALGDEVEGFAPGTRFEDIPNDWCCPDCGATKEDYVLYQEKLG.

2 consecutive Rubredoxin-like domains span residues 1-53 (MARY…FVLI) and 119-170 (FLKW…YVLY). Residues C6, C9, C39, C42, C124, C127, C157, and C160 each contribute to the Fe cation site.

The protein belongs to the rubredoxin family. Fe(3+) is required as a cofactor.

The protein localises to the cytoplasm. Its pathway is hydrocarbon metabolism; alkane degradation. In terms of biological role, involved in the hydrocarbon hydroxylating system, which transfers electrons from NADH to rubredoxin reductase and then through rubredoxin to alkane 1 monooxygenase. This Pseudomonas putida (Arthrobacter siderocapsulatus) protein is Rubredoxin-1 (alkG).